A 120-amino-acid chain; its full sequence is Large ribosomal subunit protein eL34 (120 aa).

The protein belongs to the eukaryotic ribosomal protein eL34 family.

This Nicotiana tabacum (Common tobacco) protein is Large ribosomal subunit protein eL34 (RPL34).